We begin with the raw amino-acid sequence, 440 residues long: Endoplasmic reticulum junction formation protein lunapark (440 aa).

Residues 1 to 45 (MGALLAKWRAKPSTVEVLEKMEKDIQSLEEFRDKNQKLRKIWVAR) are Cytoplasmic-facing. A coiled-coil region spans residues 16 to 40 (EVLEKMEKDIQSLEEFRDKNQKLRK). A helical transmembrane segment spans residues 46–66 (LFFYSTILYILTSLTVYLWYL). Over 67–77 (PGGMTARLLTT) the chain is Lumenal. Residues 78–98 (LLFLLFPVLIWFVRTLLILWF) traverse the membrane as a helical segment. The Cytoplasmic segment spans residues 99-440 (SRRTERNNDA…ESEESFMETE (342 aa)). A coiled-coil region spans residues 100–128 (RRTERNNDALELLKAEKKKILEEVMEKET). Residues 149–169 (LELPVPGPPITPRPGQDLRQR) are disordered. At Thr159 the chain carries Phosphothreonine. A phosphoserine mark is found at Ser177, Ser179, Ser188, and Ser192. Phosphothreonine is present on Thr198. The tract at residues 202–247 (QRDTSAPGGPPERSVQPTPQSNILQRRPGSPATAVSGMALHPPGPP) is disordered. Phosphoserine is present on residues Ser206 and Ser215. Over residues 216–225 (VQPTPQSNIL) the composition is skewed to polar residues. Thr219 carries the post-translational modification Phosphothreonine. Residues Ser222 and Ser231 each carry the phosphoserine modification. A C4-type; plays a role in ER morphology zinc finger spans residues 280–305 (CQQCFSHNGMALKEEFEYVAFRCAYC). A disordered region spans residues 316-440 (PQAPRLQEIS…ESEESFMETE (125 aa)). A Phosphoserine modification is found at Ser325. Polar residues predominate over residues 334–343 (DSQGSVNTLQ). Acidic residues-rich tracts occupy residues 370–411 (QAIE…DDTE) and 431–440 (ESEESFMETE).

This sequence belongs to the lunapark family. As to quaternary structure, homodimer; homodimerization requires the C4-type zinc finger motif and decreases during mitosis in a phosphorylation-dependent manner. In terms of processing, phosphorylated. Phosphorylation at Thr-159 and Ser-325 occurs during interphase. Phosphorylation at Ser-177, Ser-179, Ser-188, Ser-192, Thr-198, Ser-206, Ser-215, Thr-219, Ser-222 and Ser-231 occurs during mitosis; these phosphorylations reduce both its homodimerization and the ER three-way tubular junction formation.

The protein resides in the endoplasmic reticulum membrane. Functionally, endoplasmic reticulum (ER)-shaping membrane protein that plays a role in determining ER morphology. Involved in the stabilization of nascent three-way ER tubular junctions within the ER network. May also play a role as a curvature-stabilizing protein within three-way ER tubular junction network. This Xenopus laevis (African clawed frog) protein is Endoplasmic reticulum junction formation protein lunapark (lnpk).